The following is a 101-amino-acid chain: Protein translation factor SUI1 homolog (101 aa).

The protein belongs to the SUI1 family.

In Methanoregula boonei (strain DSM 21154 / JCM 14090 / 6A8), this protein is Protein translation factor SUI1 homolog.